A 217-amino-acid chain; its full sequence is Small ribosomal subunit protein uS3 (217 aa).

One can recognise a KH type-2 domain in the interval 38–106 (IRKFVQKELA…QVHINIIEIK (69 aa)).

This sequence belongs to the universal ribosomal protein uS3 family. Part of the 30S ribosomal subunit. Forms a tight complex with proteins S10 and S14.

Its function is as follows. Binds the lower part of the 30S subunit head. Binds mRNA in the 70S ribosome, positioning it for translation. This Streptococcus gordonii (strain Challis / ATCC 35105 / BCRC 15272 / CH1 / DL1 / V288) protein is Small ribosomal subunit protein uS3.